A 182-amino-acid polypeptide reads, in one-letter code: CDP-diacylglycerol--glycerol-3-phosphate 3-phosphatidyltransferase (182 aa).

The Cytoplasmic segment spans residues 2 to 12 (QFNIPTLLTLF). Residues 13–37 (RVILIPFFVLVFYLPVTWSPFAAAL) traverse the membrane as a helical segment. Topologically, residues 38 to 60 (IFCVAAVTDWFDGFLARRWNQST) are periplasmic. The chain crosses the membrane as a helical span at residues 61-81 (RFGAFLDPVADKVLVAIAMVL). Over 82-86 (VTEHY) the chain is Cytoplasmic. A helical membrane pass occupies residues 87–107 (HSWWVTLPAATMIAREIIISA). At 108 to 145 (LREWMAELGKRSSVAVSWIGKVKTTAQMVALAWLLWRP) the chain is on the periplasmic side. A helical transmembrane segment spans residues 146–168 (NIWVEYAGIALFFVAAVLTLWSM). Residues 169-181 (LQYLSAARADLLD) lie on the Cytoplasmic side of the membrane.

The protein belongs to the CDP-alcohol phosphatidyltransferase class-I family.

The protein localises to the cell inner membrane. The catalysed reaction is a CDP-1,2-diacyl-sn-glycerol + sn-glycerol 3-phosphate = a 1,2-diacyl-sn-glycero-3-phospho-(1'-sn-glycero-3'-phosphate) + CMP + H(+). The protein operates within phospholipid metabolism; phosphatidylglycerol biosynthesis; phosphatidylglycerol from CDP-diacylglycerol: step 1/2. In terms of biological role, catalyzes the conversion of cytidine diphosphate diacylglycerol (CDP-DG) and glycerol 3-phosphate into phosphatidylglycerol. Essential for the synthesis of anionic phospholipids, thereby playing a role in balancing the ratio of zwitterionic and anionic phospholipids, which is thought to be important for normal membrane function. The protein is CDP-diacylglycerol--glycerol-3-phosphate 3-phosphatidyltransferase of Shigella sonnei (strain Ss046).